Consider the following 153-residue polypeptide: Ribonuclease K6 (153 aa).

An N-terminal signal peptide occupies residues Met-1–Gln-27. Catalysis depends on His-41, which acts as the Proton acceptor. 4 disulfides stabilise this stretch: Cys-49–Cys-107, Cys-63–Cys-117, Cys-81–Cys-132, and Cys-88–Cys-95. N-linked (GlcNAc...) asparagine glycosylation is present at Asn-58. Lys-64–Thr-68 lines the substrate pocket. N-linked (GlcNAc...) asparagine glycosylation occurs at Asn-85. Lys-89 is a binding site for substrate. His-148 (proton donor) is an active-site residue.

Belongs to the pancreatic ribonuclease family. Interacts (via N-terminus) with bacterial lipopolysaccharide (LPS). As to expression, highly expressed in spleen (at protein level). Has little or no expression in healthy kidneys (at protein level). Detected at high levels in infected kidneys (at protein level). Expressed at low levels in bladder. Also detected in skeletal muscle, heart and bone marrow.

It localises to the secreted. The protein resides in the lysosome. It is found in the cytoplasmic granule. In terms of biological role, ribonuclease which shows a preference for the pyrimidines uridine and cytosine. Has potent antibacterial activity against a range of Gram-positive and Gram-negative bacteria, including P.aeruginosa, A.baumanii, M.luteus, S.aureus, E.faecalis, E.faecium, S.saprophyticus and E.coli. Causes loss of bacterial membrane integrity, and also promotes agglutination of Gram-negative bacteria. Probably contributes to urinary tract sterility. Bactericidal activity is independent of RNase activity. In Mus musculus (Mouse), this protein is Ribonuclease K6 (Rnase6).